The following is a 794-amino-acid chain: Striatin-3 (794 aa).

Residue Met1 is modified to N-acetylmethionine. Residues 1 to 12 (MDELAGGGGGQG) are compositionally biased toward gly residues. The tract at residues 1-59 (MDELAGGGGGQGMAVPPRPQQGPGGNLSLPPGANGAPGGGGPPAAETAGPPAGPELSRP) is disordered. The tract at residues 70–78 (YIQHEWARF) is caveolin-binding. Residues 76 to 135 (ARFEMERAHWEVERAELQARIAFLQGERKGQENLKKDLVRRIKMLEYALKQERAKYHKLK) are a coiled coil. Residue Thr149 is modified to Phosphothreonine. The tract at residues 164-181 (QNSQLTWKQGRQLLRQYL) is calmodulin-binding. 5 positions are modified to phosphoserine: Ser200, Ser212, Ser227, Ser255, and Ser332. A disordered region spans residues 309 to 339 (EDGEGAGEARSSGDGTEWDKDDLSPTAEVWD). WD repeat units follow at residues 475 to 514 (SHFDGVRALAFHPVEPVLVTASEDHTLKLWNLQKTVPAKK), 528 to 567 (AHIGPVLSLAISSNGEQCFSGGIDATIQWWNMPSPNVDPY), 581 to 620 (AHTDAVWGLAYSGIKNQLLSCSADGTIRLWNPQEKLPCIC), 676 to 715 (QSSNHINRVVSHPTLPVTITAHEDRHIKFFDNKTGKMIHS), 718 to 757 (AHLDAVTSLAVDPNGIYLMSGSHDCSIRLWNLDSKTCVQE), and 764 to 794 (KLDESIYDVAFHPSKAYIASAGADALAKVFV).

Belongs to the WD repeat striatin family. As to quaternary structure, tetramerizes. Part of the core of STRIPAK complexes composed of PP2A catalytic and scaffolding subunits, the striatins (PP2A regulatory subunits), the striatin-associated proteins MOB4, STRIP1 and STRIP2, PDCD10 and members of the STE20 kinases, such as STK24 and STK26. The STRIPAK complex can be extended by adapter proteins such as SLMAP:SIKE1 or CTTNBP2NL. Interacts with CDC42BPB.

The protein resides in the cytoplasm. The protein localises to the membrane. Calmodulin-binding scaffolding protein which is the center of the striatin-interacting phosphatase and kinase (STRIPAK) complexes. STRIPAK complexes have critical roles in protein (de)phosphorylation and are regulators of multiple signaling pathways including Hippo, MAPK, nuclear receptor and cytoskeleton remodeling. Different types of STRIPAK complexes are involved in a variety of biological processes such as cell growth, differentiation, apoptosis, metabolism and immune regulation. This chain is Striatin-3 (Strn3), found in Rattus norvegicus (Rat).